The chain runs to 180 residues: Guanosine-3',5'-bis(diphosphate) 3'-pyrophosphohydrolase MESH1 (180 aa).

The HD domain occupies 33–128 (YINHPIGVAR…VKLADKLYNL (96 aa)). Residues histidine 36, histidine 62, and aspartate 63 each coordinate Mn(2+). Catalysis depends on nucleophile residues glutamate 66 and aspartate 67. Position 123 (aspartate 123) interacts with Mn(2+).

This sequence belongs to the MESH1 family. Requires Mn(2+) as cofactor.

It catalyses the reaction guanosine 3',5'-bis(diphosphate) + H2O = GDP + diphosphate + H(+). Functionally, ppGpp hydrolyzing enzyme involved in starvation response. This Danio rerio (Zebrafish) protein is Guanosine-3',5'-bis(diphosphate) 3'-pyrophosphohydrolase MESH1 (hddc3).